The chain runs to 79 residues: MPKRILQGVVVGDKNEKTVVVRVERRFAHPLLQKTVRRSKKYKAHDENNQYKIGDTVSIEECAPISKDKRWTVISAQGK.

Belongs to the universal ribosomal protein uS17 family. As to quaternary structure, part of the 30S ribosomal subunit.

One of the primary rRNA binding proteins, it binds specifically to the 5'-end of 16S ribosomal RNA. The protein is Small ribosomal subunit protein uS17 of Rhizobium johnstonii (strain DSM 114642 / LMG 32736 / 3841) (Rhizobium leguminosarum bv. viciae).